The primary structure comprises 708 residues: DNA ligase (708 aa).

NAD(+) is bound by residues 35–39 (DADYD), 84–85 (SL), and Glu-118. Lys-120 acts as the N6-AMP-lysine intermediate in catalysis. NAD(+) is bound by residues Arg-141, Glu-182, Lys-303, and Lys-327. The Zn(2+) site is built by Cys-419, Cys-422, Cys-437, and Cys-443. One can recognise a BRCT domain in the interval 628 to 708 (TRASEVSGKT…GWAKIVADAQ (81 aa)).

It belongs to the NAD-dependent DNA ligase family. LigA subfamily. Mg(2+) serves as cofactor. Mn(2+) is required as a cofactor.

The catalysed reaction is NAD(+) + (deoxyribonucleotide)n-3'-hydroxyl + 5'-phospho-(deoxyribonucleotide)m = (deoxyribonucleotide)n+m + AMP + beta-nicotinamide D-nucleotide.. DNA ligase that catalyzes the formation of phosphodiester linkages between 5'-phosphoryl and 3'-hydroxyl groups in double-stranded DNA using NAD as a coenzyme and as the energy source for the reaction. It is essential for DNA replication and repair of damaged DNA. This Rhizorhabdus wittichii (strain DSM 6014 / CCUG 31198 / JCM 15750 / NBRC 105917 / EY 4224 / RW1) (Sphingomonas wittichii) protein is DNA ligase.